The sequence spans 474 residues: Stabilizer of axonemal microtubules 1 (474 aa).

Mn stretches follow at residues 30 to 64 (KPCL…KGSI), 65 to 97 (PMEG…PSEE), 98 to 131 (NMDL…PYSN), 132 to 165 (KMEY…PASV), 166 to 199 (RFDN…LCNI), 200 to 232 (PLED…PCEI), 233 to 266 (PFES…GLDM), 267 to 299 (PFSN…PPED), 300 to 332 (SMDL…RKSG), 333 to 366 (RFEG…FPTE), 367 to 400 (PLDC…RGNV), and 401 to 434 (PVEG…TFEE). Positions 318-350 (PARSCRPAPQIRKSGRFEGSSTTKDDYKQWSSM) are disordered. Residues 444 to 474 (KPVSQAGSQQSSHLSVDDSENPSQRKLEVSA) form a disordered region. Polar residues predominate over residues 448-457 (QAGSQQSSHL).

It belongs to the FAM154 family. In terms of assembly, associates with microtubules via the Mn regions.

Its subcellular location is the cytoplasm. It is found in the cytoskeleton. The protein resides in the microtubule organizing center. The protein localises to the centrosome. It localises to the centriole. Its subcellular location is the cilium basal body. It is found in the cilium axoneme. The protein resides in the flagellum axoneme. Its function is as follows. May play a role in the regulation of cilium length. Stabilizes microtubules at low temperature. This chain is Stabilizer of axonemal microtubules 1 (SAXO1), found in Macaca fascicularis (Crab-eating macaque).